A 242-amino-acid polypeptide reads, in one-letter code: Putative S-adenosyl-L-methionine-dependent methyltransferase Mmcs_0580 (242 aa).

Residues Asp104 and 134 to 135 (DL) contribute to the S-adenosyl-L-methionine site.

It belongs to the UPF0677 family.

Its function is as follows. Exhibits S-adenosyl-L-methionine-dependent methyltransferase activity. The polypeptide is Putative S-adenosyl-L-methionine-dependent methyltransferase Mmcs_0580 (Mycobacterium sp. (strain MCS)).